A 467-amino-acid chain; its full sequence is Asparagine--tRNA ligase (467 aa).

Belongs to the class-II aminoacyl-tRNA synthetase family. Homodimer.

It localises to the cytoplasm. It catalyses the reaction tRNA(Asn) + L-asparagine + ATP = L-asparaginyl-tRNA(Asn) + AMP + diphosphate + H(+). This chain is Asparagine--tRNA ligase, found in Actinobacillus pleuropneumoniae serotype 3 (strain JL03).